Consider the following 188-residue polypeptide: Putative manganese efflux pump MntP (188 aa).

The next 6 helical transmembrane spans lie at 3–23, 41–61, 62–82, 107–129, 143–163, and 168–188; these read LSATILLAFGMSMDAFAASIG, LIFGAIETLTPLVGWGLGMLA, SQFILEWNHWIAFILLVFLGG, LLVTTAFATSLDAMAVGVGLAFL, ATFIMSTLGMMVGRFIGPLLG, and ILGGIVLIGIGSEILWSHFAG.

The protein belongs to the MntP (TC 9.B.29) family.

Its subcellular location is the cell inner membrane. Its function is as follows. Probably functions as a manganese efflux pump. The sequence is that of Putative manganese efflux pump MntP from Klebsiella pneumoniae subsp. pneumoniae (strain ATCC 700721 / MGH 78578).